The primary structure comprises 336 residues: uncharacterized protein (336 aa).

Disordered regions lie at residues 29–93 (GGVS…HSGA) and 116–147 (LQER…GVTG). Composition is skewed to polar residues over residues 70–82 (SGGS…TSTA) and 125–141 (PWRT…SQPH).

This is an uncharacterized protein from Bos taurus (Bovine).